The following is a 241-amino-acid chain: Phosphoribosylaminoimidazole-succinocarboxamide synthase (241 aa).

This sequence belongs to the SAICAR synthetase family.

The enzyme catalyses 5-amino-1-(5-phospho-D-ribosyl)imidazole-4-carboxylate + L-aspartate + ATP = (2S)-2-[5-amino-1-(5-phospho-beta-D-ribosyl)imidazole-4-carboxamido]succinate + ADP + phosphate + 2 H(+). Its pathway is purine metabolism; IMP biosynthesis via de novo pathway; 5-amino-1-(5-phospho-D-ribosyl)imidazole-4-carboxamide from 5-amino-1-(5-phospho-D-ribosyl)imidazole-4-carboxylate: step 1/2. This chain is Phosphoribosylaminoimidazole-succinocarboxamide synthase, found in Lacticaseibacillus paracasei (strain ATCC 334 / BCRC 17002 / CCUG 31169 / CIP 107868 / KCTC 3260 / NRRL B-441) (Lactobacillus paracasei).